A 174-amino-acid polypeptide reads, in one-letter code: MPAYHSSFLSLTDVPTTGNIAMLPLKTKFRGPAYPADESQMDIIDECIGLFRANCFFRNFEIKGPADRTLIYGTLFISECLGRVNGLNYRDAERQLNSLALENFSIPGSAGFPLNALYAPPLSPQDAEIMRTYLTQFRQELAYRLLSHVYATEKDHPSKWWTCFSKRRFMNKAL.

It belongs to the ARPC3 family. As to quaternary structure, component of the Arp2/3 complex composed of arp2, act2, arc1/p41-ARC, arc2/p34-ARC, arc3/p21-ARC, arc4/p20-ARC and arc5/p16-ARC.

Its subcellular location is the cytoplasm. The protein localises to the cytoskeleton. The protein resides in the actin patch. Functionally, functions as a component of the Arp2/3 complex which is involved in regulation of actin polymerization and together with an activating nucleation-promoting factor (NPF) mediates the formation of branched actin networks. This Schizosaccharomyces pombe (strain 972 / ATCC 24843) (Fission yeast) protein is Actin-related protein 2/3 complex subunit 3 (arc3).